A 372-amino-acid polypeptide reads, in one-letter code: MSNQHALLMFNLLPVGSNISTWWNFGSMLLTCLMLQTITGFFLALHYTANINLAFSSVIHITRDVPYGWIMQNLHAISASLFFVCIYIHIARGLYYGLYLNKEVWLSGTALLITLMATAFFGYVLPWGQMSFWAATVITNLLTAIPYLGTTLTTWLWGGFSINDPTITRFFALHFILPFIIISLSSIHIILLHNEGSNNPLGTNSDIDKIPFHPYHSYKDMLMATTMITLLFLILSFAPNLLNDPENFSKANPLVTPQHIKPEWYFLFAYGILRSIPNKLGGTLALIMSVMILTTMPFTHTSHTRSMMFRPLSQILFWTLIATFITITWTASKPVEPPFITISQTTSIIYFFFFITTPLLGWAENKMMMMNN.

A run of 4 helical transmembrane segments spans residues F25–L45, W69–I90, W105–L125, and F170–I190. Residues H75 and H89 each coordinate heme b. Residues H174 and H188 each contribute to the heme b site. H193 contributes to the a ubiquinone binding site. 4 helical membrane-spanning segments follow: residues Y218–A238, L280–H300, L312–S332, and F339–P358.

It belongs to the cytochrome b family. As to quaternary structure, the cytochrome bc1 complex contains 3 respiratory subunits (MT-CYB, CYC1 and UQCRFS1), 2 core proteins (UQCRC1 and UQCRC2) and probably 6 low-molecular weight proteins. Heme b is required as a cofactor.

It localises to the mitochondrion inner membrane. Functionally, component of the ubiquinol-cytochrome c reductase complex (complex III or cytochrome b-c1 complex) that is part of the mitochondrial respiratory chain. The b-c1 complex mediates electron transfer from ubiquinol to cytochrome c. Contributes to the generation of a proton gradient across the mitochondrial membrane that is then used for ATP synthesis. This is Cytochrome b (MT-CYB) from Naja nivea (Cape cobra).